The following is a 186-amino-acid chain: Translation initiation factor IF-3 (186 aa).

The protein belongs to the IF-3 family. Monomer.

It is found in the cytoplasm. In terms of biological role, IF-3 binds to the 30S ribosomal subunit and shifts the equilibrium between 70S ribosomes and their 50S and 30S subunits in favor of the free subunits, thus enhancing the availability of 30S subunits on which protein synthesis initiation begins. The chain is Translation initiation factor IF-3 from Borreliella burgdorferi (strain ATCC 35210 / DSM 4680 / CIP 102532 / B31) (Borrelia burgdorferi).